A 603-amino-acid chain; its full sequence is NADH-ubiquinone oxidoreductase chain 5 (603 aa).

16 consecutive transmembrane segments (helical) span residues 4 to 24, 38 to 58, 89 to 109, 122 to 142, 171 to 191, 211 to 233, 241 to 261, 273 to 293, 301 to 320, 325 to 347, 366 to 386, 405 to 424, 457 to 477, 488 to 508, 537 to 557, and 582 to 602; these read FTTM…ATLI, TAIA…ICLG, FLPV…WYMA, LIFL…QLFI, AILY…WFLL, LPLL…HPWL, TPVS…FLLI, IQTL…ICAL, IVAF…IGIN, AFLH…GSII, MPLT…MPFL, NAWA…AYST, LMTG…PTSL, LAAL…NYLA, IPHL…DLTW, and GMIK…LLMI.

Belongs to the complex I subunit 5 family. Core subunit of respiratory chain NADH dehydrogenase (Complex I) which is composed of 45 different subunits.

It is found in the mitochondrion inner membrane. The enzyme catalyses a ubiquinone + NADH + 5 H(+)(in) = a ubiquinol + NAD(+) + 4 H(+)(out). Core subunit of the mitochondrial membrane respiratory chain NADH dehydrogenase (Complex I) which catalyzes electron transfer from NADH through the respiratory chain, using ubiquinone as an electron acceptor. Essential for the catalytic activity and assembly of complex I. This is NADH-ubiquinone oxidoreductase chain 5 (MT-ND5) from Pongo pygmaeus (Bornean orangutan).